A 299-amino-acid polypeptide reads, in one-letter code: Protein LacX, plasmid (299 aa).

In Lactococcus lactis subsp. lactis (Streptococcus lactis), this protein is Protein LacX, plasmid (lacX).